The sequence spans 111 residues: Prothymosin alpha (111 aa).

N-acetylmethionine is present on methionine 1. Residues 1–111 (MSDAAVDTSS…TKKQKTDEDD (111 aa)) are disordered. Position 2 is an N-acetylserine; in Prothymosin alpha, N-terminally processed (serine 2). Residue serine 2 is modified to Phosphoserine. At threonine 8 the chain carries Phosphothreonine. Residues serine 9 and serine 10 each carry the phosphoserine modification. Residues threonine 13 and threonine 14 each carry the phosphothreonine modification. Positions 13-31 (TTKDLKEKKEVVEEAENGR) are enriched in basic and acidic residues. Lysine 15 bears the N6-acetyllysine; alternate mark. Lysine 15 is subject to N6-succinyllysine; alternate. Positions 40 to 84 (ENEENGEQEADNEVDEEEEEGGEEEEEEEEGDGEEEDGDEDEEAE) are enriched in acidic residues. Residues 101–111 (DTKKQKTDEDD) show a composition bias toward basic and acidic residues. Threonine 102 bears the Phosphothreonine mark. Residue lysine 103 is modified to N6-acetyllysine; alternate. Residue lysine 103 forms a Glycyl lysine isopeptide (Lys-Gly) (interchain with G-Cter in SUMO2); alternate linkage. Threonine 107 is subject to Phosphothreonine.

It belongs to the pro/parathymosin family. Interacts with NUPR1; regulates apoptotic process. Post-translationally, covalently linked to a small RNA of about 20 nucleotides.

Its subcellular location is the nucleus. Prothymosin alpha may mediate immune function by conferring resistance to certain opportunistic infections. This is Prothymosin alpha (PTMA) from Homo sapiens (Human).